A 355-amino-acid chain; its full sequence is DNA polymerase IV (355 aa).

Residues 14 to 198 enclose the UmuC domain; sequence IIHVDMDAFF…LPVEKFHGVG (185 aa). The Mg(2+) site is built by D18 and D116. The active site involves E117.

This sequence belongs to the DNA polymerase type-Y family. Monomer. The cofactor is Mg(2+).

It localises to the cytoplasm. The enzyme catalyses DNA(n) + a 2'-deoxyribonucleoside 5'-triphosphate = DNA(n+1) + diphosphate. Its function is as follows. Poorly processive, error-prone DNA polymerase involved in untargeted mutagenesis. Copies undamaged DNA at stalled replication forks, which arise in vivo from mismatched or misaligned primer ends. These misaligned primers can be extended by PolIV. Exhibits no 3'-5' exonuclease (proofreading) activity. May be involved in translesional synthesis, in conjunction with the beta clamp from PolIII. The chain is DNA polymerase IV from Streptococcus suis (strain 98HAH33).